Here is a 498-residue protein sequence, read N- to C-terminus: Glycylpeptide N-tetradecanoyltransferase 2 (498 aa).

The interval 1 to 88 (MAEDSESAAS…QPSKNPSVPM (88 aa)) is disordered. Residues 15–32 (ELDDQDTCGIDGDNEEET) show a composition bias toward acidic residues. Phosphoserine is present on serine 38. The segment covering 45 to 57 (AKKKKKKQKRKKE) has biased composition (basic residues). The span at 61–86 (SGGTKSDSASDSQEIKIQQPSKNPSV) shows a compositional bias: polar residues. Residues histidine 117, tryptophan 122, leucine 250, valine 252, serine 258, arginine 260, valine 261, and alanine 262 each contribute to the tetradecanoyl-CoA site.

Belongs to the NMT family.

It is found in the cytoplasm. The protein localises to the membrane. The catalysed reaction is N-terminal glycyl-[protein] + tetradecanoyl-CoA = N-tetradecanoylglycyl-[protein] + CoA + H(+). The enzyme catalyses N-terminal glycyl-L-lysyl-[protein] + tetradecanoyl-CoA = N-terminal glycyl-(N(6)-tetradecanoyl)-L-lysyl-[protein] + CoA + H(+). In terms of biological role, adds a myristoyl group to the N-terminal glycine residue of certain cellular and viral proteins. Also able to mediate N-terminal lysine myristoylation of proteins: catalyzes myristoylation of ARF6 on both 'Gly-2' and 'Lys-3'. Lysine myristoylation is required to maintain ARF6 on membranes during the GTPase cycle. The chain is Glycylpeptide N-tetradecanoyltransferase 2 from Homo sapiens (Human).